We begin with the raw amino-acid sequence, 1732 residues long: Serine/threonine-protein kinase MRCK alpha (1732 aa).

Residues 77 to 343 form the Protein kinase domain; sequence FEILKVIGRG…IEDFKKHPFF (267 aa). ATP is bound by residues 83 to 91 and Lys-106; that span reads IGRGAFGEV. Asp-201 (proton acceptor) is an active-site residue. Phosphoserine; by autocatalysis occurs at positions 222 and 234. Position 240 is a phosphothreonine; by autocatalysis (Thr-240). In terms of domain architecture, AGC-kinase C-terminal spans 344 to 414; the sequence is SGIDWDNIRN…TSSCVLSDRS (71 aa). Coiled coils occupy residues 437-670, 713-820, and 880-943; these read NNLA…KQKQ, SEIK…WEAQ, and LELQ…SEKG. The disordered stretch occupies residues 973-1002; that stretch reads CTPAGKGRRIADSAPLPVHTPTLRKKGCPA. The segment at 1012-1062 adopts a Phorbol-ester/DAG-type zinc-finger fold; sequence THQFFVKSFTAPTKCHQCTSLMVGLIRQGCSCEVCGFSCHITCVNKAPTTC. Residues 1082-1201 form the PH domain; sequence GTAYEGHVRI…WVGVLSELHK (120 aa). Phosphoserine is present on Ser-1127. The CNH domain occupies 1227–1499; it reads IKTTQAAAII…RPLNTEGSLN (273 aa). Ser-1545 is subject to Phosphoserine. The 14-residue stretch at 1571 to 1584 folds into the CRIB domain; sequence ISNPTNFNHIAHMG. Residues 1592-1732 are disordered; that stretch reads LKDLPMNPRP…ESTDRGSWDP (141 aa). Residues 1604 to 1619 show a composition bias toward polar residues; sequence SRTVFSGSVSIPSITK. Ser-1611, Ser-1613, Ser-1629, Ser-1651, Ser-1664, Ser-1669, Ser-1693, Ser-1719, and Ser-1721 each carry phosphoserine. The span at 1625–1640 shows a compositional bias: low complexity; the sequence is GRSMSASSGLSARSSA. Over residues 1665–1674 the composition is skewed to low complexity; that stretch reads PSEGSLSSGG.

It belongs to the protein kinase superfamily. AGC Ser/Thr protein kinase family. DMPK subfamily. In terms of assembly, homodimer and homotetramer via the coiled coil regions. Interacts tightly with GTP-bound but not GDP-bound CDC42. Forms a tripartite complex with MYO18A and LURAP1 with the latter acting as an adapter connecting CDC42BPA and MYO18A. LURAP1 binding results in activation of CDC42BPA by abolition of its negative autoregulation. Interacts with LURAP1. Interacts (via AGC-kinase C-terminal domain) with FAM89B/LRAP25 (via LRR repeat). Forms a tripartite complex with FAM89B/LRAP25 and LIMK1. The cofactor is Mg(2+). Post-translationally, proteolytically cleaved by caspases upon apoptosis induction. The cleavage at Asp-478 by CASP3 increases its kinase activity (in vitro). As to expression, highly expressed in the brain and lung and present in lower levels in all other tissues tested.

Its subcellular location is the cytoplasm. The protein resides in the cell projection. It is found in the lamellipodium. The catalysed reaction is L-seryl-[protein] + ATP = O-phospho-L-seryl-[protein] + ADP + H(+). The enzyme catalyses L-threonyl-[protein] + ATP = O-phospho-L-threonyl-[protein] + ADP + H(+). Its activity is regulated as follows. Maintained in an inactive, closed conformation by an interaction between the kinase domain and the negative autoregulatory C-terminal coiled-coil region. Agonist binding to the phorbol ester binding site disrupts this, releasing the kinase domain to allow N-terminus-mediated dimerization and kinase activation by transautophosphorylation. Inhibited by chelerythrine chloride. In terms of biological role, serine/threonine-protein kinase which is an important downstream effector of CDC42 and plays a role in the regulation of cytoskeleton reorganization and cell migration. Regulates actin cytoskeletal reorganization via phosphorylation of PPP1R12A and MYL9/MLC2. In concert with MYO18A and LURAP1, is involved in modulating lamellar actomyosin retrograde flow that is crucial to cell protrusion and migration. Phosphorylates: PPP1R12C, LIMK1 and LIMK2. May play a role in TFRC-mediated iron uptake. In concert with FAM89B/LRAP25 mediates the targeting of LIMK1 to the lamellipodium resulting in its activation and subsequent phosphorylation of CFL1 which is important for lamellipodial F-actin regulation. Triggers the formation of an extrusion apical actin ring required for epithelial extrusion of apoptotic cells. The chain is Serine/threonine-protein kinase MRCK alpha from Rattus norvegicus (Rat).